Consider the following 657-residue polypeptide: Matrix metalloproteinase-15 (657 aa).

The N-terminal stretch at 1 to 36 is a signal peptide; it reads MGSDRSALGRPGCTGSCLSSRASLLPLLLVLLDCLG. A propeptide spanning residues 37-127 is cleaved from the precursor; sequence HGTASKDAEV…KANLRRRRKR (91 aa). A Cysteine switch motif is present at residues 105–112; the sequence is PRCGVPDQ. Residue C107 coordinates Zn(2+). Residues 128–614 lie on the Extracellular side of the membrane; the sequence is YTLTGKAWNN…MEEVVRTVNV (487 aa). A glycan (N-linked (GlcNAc...) asparagine) is linked at N146. Zn(2+) is bound at residue H255. E256 is an active-site residue. Zn(2+) contacts are provided by H259 and H265. A disordered region spans residues 295-365; that stretch reads IQQLYGSPDG…ERPDQYGPNI (71 aa). A compositionally biased stretch (pro residues) spans 328-337; sequence PRPPQPPHPG. Hemopexin repeat units follow at residues 363–411, 412–457, 459–507, and 508–555; these read PNIC…WRGL, PGNI…GTDI, YDRI…QGIP, and TSPK…FMGC. C366 and C555 are oxidised to a cystine. The N-linked (GlcNAc...) asparagine glycan is linked to N414. Residues 561-599 form a disordered region; the sequence is PRSRWPDVARPPFNPNGGAEPEADGDSKEENAGDKDEGS. Basic and acidic residues predominate over residues 585–599; sequence GDSKEENAGDKDEGS. The chain crosses the membrane as a helical span at residues 615-635; it reads VMVLVPLLLLLCILGLAFALV. The Cytoplasmic portion of the chain corresponds to 636-657; the sequence is QMQRKGAPRMLLYCKRSLQEWV.

It belongs to the peptidase M10A family. Zn(2+) serves as cofactor. It depends on Ca(2+) as a cofactor. In terms of processing, the precursor is cleaved by a furin endopeptidase.

It localises to the membrane. Functionally, endopeptidase that degrades various components of the extracellular matrix. May activate progelatinase A. This Mus musculus (Mouse) protein is Matrix metalloproteinase-15 (Mmp15).